The following is a 124-amino-acid chain: Putative iron-sulfur cluster insertion protein ErpA (124 aa).

Iron-sulfur cluster-binding residues include cysteine 52, cysteine 116, and cysteine 118.

Belongs to the HesB/IscA family. In terms of assembly, homodimer. Requires iron-sulfur cluster as cofactor.

In terms of biological role, required for insertion of 4Fe-4S clusters. This is Putative iron-sulfur cluster insertion protein ErpA from Ralstonia nicotianae (strain ATCC BAA-1114 / GMI1000) (Ralstonia solanacearum).